The sequence spans 201 residues: Inosine triphosphate pyrophosphatase (201 aa).

16-21 (TGNAKK) serves as a coordination point for ITP. Position 44 (Glu-44) interacts with Mg(2+). Residues Lys-56, 72-73 (DT), Lys-89, 148-151 (FGWD), Lys-171, and 176-177 (HR) contribute to the ITP site.

Belongs to the HAM1 NTPase family. As to quaternary structure, homodimer. Mg(2+) is required as a cofactor. Requires Mn(2+) as cofactor.

Its subcellular location is the cytoplasm. The enzyme catalyses ITP + H2O = IMP + diphosphate + H(+). The catalysed reaction is dITP + H2O = dIMP + diphosphate + H(+). It catalyses the reaction XTP + H2O = XMP + diphosphate + H(+). Pyrophosphatase that hydrolyzes non-canonical purine nucleotides such as inosine triphosphate (ITP), deoxyinosine triphosphate (dITP) or xanthosine 5'-triphosphate (XTP) to their respective monophosphate derivatives. The enzyme does not distinguish between the deoxy- and ribose forms. Probably excludes non-canonical purines from RNA and DNA precursor pools, thus preventing their incorporation into RNA and DNA and avoiding chromosomal lesions. The sequence is that of Inosine triphosphate pyrophosphatase from Sorghum bicolor (Sorghum).